A 274-amino-acid chain; its full sequence is Undecaprenyl-diphosphatase (274 aa).

6 helical membrane passes run 44 to 64, 85 to 105, 109 to 129, 185 to 205, 215 to 235, and 250 to 270; these read AKVF…LVYW, LNVL…GKAI, LFTP…ILWA, ATDY…VYSL, ADIP…WLCV, and FAWY…SGLV.

This sequence belongs to the UppP family.

The protein resides in the cell inner membrane. The catalysed reaction is di-trans,octa-cis-undecaprenyl diphosphate + H2O = di-trans,octa-cis-undecaprenyl phosphate + phosphate + H(+). Its function is as follows. Catalyzes the dephosphorylation of undecaprenyl diphosphate (UPP). Confers resistance to bacitracin. This chain is Undecaprenyl-diphosphatase, found in Acidovorax ebreus (strain TPSY) (Diaphorobacter sp. (strain TPSY)).